A 142-amino-acid polypeptide reads, in one-letter code: Small ribosomal subunit protein uS12 (142 aa).

The segment at 1 to 44 is disordered; sequence MTNGKYAARKLKKDRQQRRWSDSEYARRERGLGKKSDPLEGAPQ. Positions 7–16 are enriched in basic residues; the sequence is AARKLKKDRQ. Residues 17–38 are compositionally biased toward basic and acidic residues; the sequence is QRRWSDSEYARRERGLGKKSDP.

This sequence belongs to the universal ribosomal protein uS12 family. In terms of assembly, part of the 30S ribosomal subunit.

With S4 and S5 plays an important role in translational accuracy. Located at the interface of the 30S and 50S subunits. The protein is Small ribosomal subunit protein uS12 of Halobacterium salinarum (strain ATCC 29341 / DSM 671 / R1).